A 368-amino-acid polypeptide reads, in one-letter code: Alanine racemase 3 (368 aa).

Lys42 (proton acceptor; specific for D-alanine) is an active-site residue. Residue Lys42 is modified to N6-(pyridoxal phosphate)lysine. Arg141 is a substrate binding site. The active-site Proton acceptor; specific for L-alanine is the Tyr262. Met310 serves as a coordination point for substrate.

The protein belongs to the alanine racemase family. Pyridoxal 5'-phosphate serves as cofactor.

It carries out the reaction L-alanine = D-alanine. The protein operates within amino-acid biosynthesis; D-alanine biosynthesis; D-alanine from L-alanine: step 1/1. Functionally, catalyzes the interconversion of L-alanine and D-alanine. May also act on other amino acids. This is Alanine racemase 3 (alr3) from Salmonella typhi.